The primary structure comprises 193 residues: Acyl carrier protein phosphodiesterase (193 aa).

The protein belongs to the AcpH family.

It catalyses the reaction holo-[ACP] + H2O = apo-[ACP] + (R)-4'-phosphopantetheine + H(+). Its function is as follows. Converts holo-ACP to apo-ACP by hydrolytic cleavage of the phosphopantetheine prosthetic group from ACP. This chain is Acyl carrier protein phosphodiesterase, found in Yersinia enterocolitica serotype O:8 / biotype 1B (strain NCTC 13174 / 8081).